A 396-amino-acid polypeptide reads, in one-letter code: MAETSIRNFNINFGPQHPAAHGVLRLVLELDGEVVERVDPHIGLLHRGTEKLIEYKTYLQAIPYFDRLDYVAPMNQEHAFALAIERLLGIDVPIRGQLIRVLYSEISRILNHLLNITTQAMDVGALTPPLWGFEEREKLMVFYERASGARMHAAYFRPGGVHQDLPEKLVEDIGKWIDPFLKTVDDLDELLTENRIFKQRNADIGIVSLEDAWAWGFSGVMVRGSGAAWDLRKSQPYECYPEMDFDIPVGKNGDCYDRYLIRMEEMRQSAKIMRQCVERLLGKERVGPVSNMDGKVVPPKRAAMKRSMESLIHHFKLYTEGYHVPAGEVYAAVEAPKGEFGVYLVADGTNKPYRCKLRAPGFAHLQAMDFMCRGHLLADVTAVLGSLDIVFGEVDR.

The protein belongs to the complex I 49 kDa subunit family. In terms of assembly, NDH-1 is composed of 14 different subunits. Subunits NuoB, C, D, E, F, and G constitute the peripheral sector of the complex.

The protein resides in the cell inner membrane. The catalysed reaction is a quinone + NADH + 5 H(+)(in) = a quinol + NAD(+) + 4 H(+)(out). NDH-1 shuttles electrons from NADH, via FMN and iron-sulfur (Fe-S) centers, to quinones in the respiratory chain. The immediate electron acceptor for the enzyme in this species is believed to be ubiquinone. Couples the redox reaction to proton translocation (for every two electrons transferred, four hydrogen ions are translocated across the cytoplasmic membrane), and thus conserves the redox energy in a proton gradient. This chain is NADH-quinone oxidoreductase subunit D, found in Chelativorans sp. (strain BNC1).